The following is a 156-amino-acid chain: Ribosomal RNA large subunit methyltransferase H (156 aa).

S-adenosyl-L-methionine contacts are provided by residues L73, G104, and 123–128 (LSPLTL).

Belongs to the RNA methyltransferase RlmH family. In terms of assembly, homodimer.

Its subcellular location is the cytoplasm. It catalyses the reaction pseudouridine(1915) in 23S rRNA + S-adenosyl-L-methionine = N(3)-methylpseudouridine(1915) in 23S rRNA + S-adenosyl-L-homocysteine + H(+). Functionally, specifically methylates the pseudouridine at position 1915 (m3Psi1915) in 23S rRNA. The chain is Ribosomal RNA large subunit methyltransferase H from Yersinia enterocolitica serotype O:8 / biotype 1B (strain NCTC 13174 / 8081).